The primary structure comprises 264 residues: Purine nucleoside phosphorylase slr1573 (264 aa).

Zn(2+)-binding residues include His61, Cys104, and His121.

The protein belongs to the purine nucleoside phosphorylase YfiH/LACC1 family. In terms of assembly, homodimer. Requires Cu(2+) as cofactor. Zn(2+) is required as a cofactor.

It carries out the reaction adenosine + phosphate = alpha-D-ribose 1-phosphate + adenine. The enzyme catalyses S-methyl-5'-thioadenosine + phosphate = 5-(methylsulfanyl)-alpha-D-ribose 1-phosphate + adenine. The catalysed reaction is inosine + phosphate = alpha-D-ribose 1-phosphate + hypoxanthine. It catalyses the reaction adenosine + H2O + H(+) = inosine + NH4(+). In terms of biological role, purine nucleoside enzyme that catalyzes the phosphorolysis of adenosine and inosine nucleosides, yielding D-ribose 1-phosphate and the respective free bases, adenine and hypoxanthine. Also catalyzes the phosphorolysis of S-methyl-5'-thioadenosine into adenine and S-methyl-5-thio-alpha-D-ribose 1-phosphate. Also has adenosine deaminase activity. This is Purine nucleoside phosphorylase slr1573 from Synechocystis sp. (strain ATCC 27184 / PCC 6803 / Kazusa).